The primary structure comprises 197 residues: MSNIVWHAHAVDKQSRAEQKGQKPLVIWFTGLSGAGKSTLAGALEQALAASGKHTYLLDGDNVRHGLCGDLGFDDAARQENIRRVGEVAKLMVDAGLIVLTAFISPFRAERELVRNLVGEGEFVEVFVDAPLSVCEERDPKGLYKKARAGEIRNFTGIDSAYEAPEQPEIHLLNAGKPVAALVDELLTALRLRVLID.

31–38 (GLSGAGKS) contacts ATP. Ser105 serves as the catalytic Phosphoserine intermediate.

The protein belongs to the APS kinase family.

It carries out the reaction adenosine 5'-phosphosulfate + ATP = 3'-phosphoadenylyl sulfate + ADP + H(+). It functions in the pathway sulfur metabolism; hydrogen sulfide biosynthesis; sulfite from sulfate: step 2/3. Catalyzes the synthesis of activated sulfate. The protein is Adenylyl-sulfate kinase of Aeromonas hydrophila subsp. hydrophila (strain ATCC 7966 / DSM 30187 / BCRC 13018 / CCUG 14551 / JCM 1027 / KCTC 2358 / NCIMB 9240 / NCTC 8049).